Reading from the N-terminus, the 370-residue chain is 2-Hydroxyacid oxidase 1 (370 aa).

Residues 1–365 form the FMN hydroxy acid dehydrogenase domain; that stretch reads MLPRLVCISD…DKTLVRKNPL (365 aa). Y26 is a glyoxylate binding site. Residues 79–81, S108, and Q130 each bind FMN; that span reads ATA. Residue Y132 coordinates glyoxylate. Position 158 (T158) interacts with FMN. R167 contacts glyoxylate. An N6-succinyllysine modification is found at K184. A phosphoserine mark is found at S194 and S230. FMN is bound by residues K236 and S258. Glyoxylate is bound by residues H260 and R263. Residue H260 is the Proton acceptor of the active site. Residues 291 to 295 and 314 to 315 each bind FMN; these read DGGVR and GR. Residues 368–370 carry the Microbody targeting signal motif; the sequence is SKI.

It belongs to the FMN-dependent alpha-hydroxy acid dehydrogenase family. In terms of assembly, homotetramer. It depends on FMN as a cofactor. As to expression, liver.

It is found in the peroxisome matrix. The catalysed reaction is a (2S)-2-hydroxycarboxylate + O2 = a 2-oxocarboxylate + H2O2. It catalyses the reaction glycolate + O2 = glyoxylate + H2O2. The enzyme catalyses glyoxylate + O2 + H2O = oxalate + H2O2 + H(+). It carries out the reaction 2-hydroxyhexadecanoate + O2 = 2-oxohexadecanoate + H2O2. The catalysed reaction is 2-hydroxyoctanoate + O2 = 2-oxooctanoate + H2O2. Its pathway is amino-acid biosynthesis; glycine biosynthesis. Its function is as follows. Broad substrate specificity (S)-2-hydroxy-acid oxidase that preferentially oxidizes glycolate. The glyoxylate produced by the oxidation of glycolate can then be utilized by alanine-glyoxylate aminotransferase for the peroxisomal synthesis of glycine; this pathway appears to be an important step for the detoxification of glyoxylate which, if allowed to accumulate, may be metabolized to oxalate with formation of kidney stones. Can also catalyze the oxidation glyoxylate, and long chain hydroxyacids such as 2-hydroxyhexadecanoate and 2-hydroxyoctanoate. Active in vitro with the artificial electron acceptor 2,6-dichlorophenolindophenol (DCIP), but O2 is believed to be the physiological electron acceptor, leading to the production of H2O2. The sequence is that of 2-Hydroxyacid oxidase 1 from Mus musculus (Mouse).